Consider the following 167-residue polypeptide: Zymogen granule membrane protein 16 (167 aa).

The N-terminal stretch at 1 to 16 (MLTVALLALLCASASG) is a signal peptide. The Jacalin-type lectin domain occupies 24 to 159 (SSYSGEYGGG…IDAIGLHWDV (136 aa)).

This sequence belongs to the jacalin lectin family. Highly expressed in liver. Detected at lower levels in colon, ileum and jejunum.

It is found in the secreted. The protein resides in the extracellular space. The protein localises to the extracellular matrix. It localises to the zymogen granule lumen. Its subcellular location is the golgi apparatus lumen. Functionally, may play a role in protein trafficking. May act as a linker molecule between the submembranous matrix on the luminal side of zymogen granule membrane (ZGM) and aggregated secretory proteins during granule formation in the TGN. The sequence is that of Zymogen granule membrane protein 16 (ZG16) from Homo sapiens (Human).